The sequence spans 567 residues: 2-isopropylmalate synthase (567 aa).

One can recognise a Pyruvate carboxyltransferase domain in the interval 28-302; sequence PQWCSVDLRD…NPELDFSDIN (275 aa). 4 residues coordinate Mg(2+): aspartate 37, histidine 241, histidine 243, and asparagine 277. The segment at 435-567 is regulatory domain; the sequence is IRTPLQLNYH…DMDTQEEDIA (133 aa).

This sequence belongs to the alpha-IPM synthase/homocitrate synthase family. LeuA type 2 subfamily. In terms of assembly, homodimer. It depends on Mg(2+) as a cofactor.

Its subcellular location is the cytoplasm. The enzyme catalyses 3-methyl-2-oxobutanoate + acetyl-CoA + H2O = (2S)-2-isopropylmalate + CoA + H(+). Its pathway is amino-acid biosynthesis; L-leucine biosynthesis; L-leucine from 3-methyl-2-oxobutanoate: step 1/4. Catalyzes the condensation of the acetyl group of acetyl-CoA with 3-methyl-2-oxobutanoate (2-ketoisovalerate) to form 3-carboxy-3-hydroxy-4-methylpentanoate (2-isopropylmalate). The polypeptide is 2-isopropylmalate synthase (Acetoanaerobium sticklandii (strain ATCC 12662 / DSM 519 / JCM 1433 / CCUG 9281 / NCIMB 10654 / HF) (Clostridium sticklandii)).